A 419-amino-acid chain; its full sequence is UDP-N-acetylglucosamine 1-carboxyvinyltransferase (419 aa).

Residue 22 to 23 (KN) participates in phosphoenolpyruvate binding. Arg91 is a binding site for UDP-N-acetyl-alpha-D-glucosamine. Residue Cys115 is the Proton donor of the active site. The residue at position 115 (Cys115) is a 2-(S-cysteinyl)pyruvic acid O-phosphothioketal. UDP-N-acetyl-alpha-D-glucosamine is bound by residues 120-124 (RPVDL), 160-163 (KVSV), Asp305, and Ile327.

Belongs to the EPSP synthase family. MurA subfamily.

The protein localises to the cytoplasm. It catalyses the reaction phosphoenolpyruvate + UDP-N-acetyl-alpha-D-glucosamine = UDP-N-acetyl-3-O-(1-carboxyvinyl)-alpha-D-glucosamine + phosphate. The protein operates within cell wall biogenesis; peptidoglycan biosynthesis. Functionally, cell wall formation. Adds enolpyruvyl to UDP-N-acetylglucosamine. This chain is UDP-N-acetylglucosamine 1-carboxyvinyltransferase, found in Tolumonas auensis (strain DSM 9187 / NBRC 110442 / TA 4).